Here is a 429-residue protein sequence, read N- to C-terminus: Serine hydroxymethyltransferase (429 aa).

(6S)-5,6,7,8-tetrahydrofolate is bound by residues Leu-126 and Gly-130–Leu-132. N6-(pyridoxal phosphate)lysine is present on Lys-235. Position 359–361 (Ser-359–Phe-361) interacts with (6S)-5,6,7,8-tetrahydrofolate.

The protein belongs to the SHMT family. In terms of assembly, homodimer. Requires pyridoxal 5'-phosphate as cofactor.

The protein resides in the cytoplasm. The catalysed reaction is (6R)-5,10-methylene-5,6,7,8-tetrahydrofolate + glycine + H2O = (6S)-5,6,7,8-tetrahydrofolate + L-serine. Its pathway is one-carbon metabolism; tetrahydrofolate interconversion. It participates in amino-acid biosynthesis; glycine biosynthesis; glycine from L-serine: step 1/1. Its function is as follows. Catalyzes the reversible interconversion of serine and glycine with tetrahydrofolate (THF) serving as the one-carbon carrier. This reaction serves as the major source of one-carbon groups required for the biosynthesis of purines, thymidylate, methionine, and other important biomolecules. Also exhibits THF-independent aldolase activity toward beta-hydroxyamino acids, producing glycine and aldehydes, via a retro-aldol mechanism. This Parasynechococcus marenigrum (strain WH8102) protein is Serine hydroxymethyltransferase.